Consider the following 299-residue polypeptide: Very long chain fatty acid elongase 5 (299 aa).

The residue at position 1 (methionine 1) is an N-acetylmethionine. 7 consecutive transmembrane segments (helical) span residues 26–46, 64–84, 112–132, 150–170, 172–192, 205–225, and 226–246; these read WFLLDNYIPTFICSVIYLLIV, ILVVYNLGLTLLSLYMFCELV, VLWWYYFSKLIEFMDTFFFIL, MLNIWWFVMNWVPCGHSYFGA, LNSFIHVLMYSYYGLSSVLSM, GQLLQSVLTIIQTSCGVIWPC, and TFPLGWLYFQIGYMISLIALF. A disordered region spans residues 262–299; the sequence is RKDHLKDHQNGSKAAVNGHTNSFSPLENNVKPRKLRKD. Over residues 279–288 the composition is skewed to polar residues; the sequence is GHTNSFSPLE. Position 285 is a phosphoserine (serine 285).

Belongs to the ELO family. ELOVL5 subfamily. As to quaternary structure, interacts with TECR.

The protein resides in the endoplasmic reticulum membrane. The protein localises to the cell projection. It is found in the dendrite. It carries out the reaction a very-long-chain acyl-CoA + malonyl-CoA + H(+) = a very-long-chain 3-oxoacyl-CoA + CO2 + CoA. The catalysed reaction is (6Z,9Z,12Z)-octadecatrienoyl-CoA + malonyl-CoA + H(+) = (8Z,11Z,14Z)-3-oxoeicosatrienoyl-CoA + CO2 + CoA. The enzyme catalyses (9Z,12Z,15Z)-octadecatrienoyl-CoA + malonyl-CoA + H(+) = (11Z,14Z,17Z)-3-oxoeicosatrienoyl-CoA + CO2 + CoA. It catalyses the reaction (9Z)-hexadecenoyl-CoA + malonyl-CoA + H(+) = 3-oxo-(11Z)-octadecenoyl-CoA + CO2 + CoA. It carries out the reaction (9Z)-octadecenoyl-CoA + malonyl-CoA + H(+) = 3-oxo-(11Z)-eicosenoyl-CoA + CO2 + CoA. The catalysed reaction is (11Z)-octadecenoyl-CoA + malonyl-CoA + H(+) = 3-oxo-(13Z)-eicosenoyl-CoA + CO2 + CoA. The enzyme catalyses (9Z,12Z)-octadecadienoyl-CoA + malonyl-CoA + H(+) = (11Z,14Z)-3-oxoicosa-11,14-dienoyl-CoA + CO2 + CoA. It catalyses the reaction (6Z,9Z,12Z,15Z)-octadecatetraenoyl-CoA + malonyl-CoA + H(+) = (8Z,11Z,14Z,17Z)-3-oxoicosatetraenoyl-CoA + CO2 + CoA. It carries out the reaction (5Z,8Z,11Z,14Z)-eicosatetraenoyl-CoA + malonyl-CoA + H(+) = (7Z,10Z,13Z,16Z)-3-oxodocosatetraenoyl-CoA + CO2 + CoA. The catalysed reaction is (5Z,8Z,11Z,14Z,17Z)-eicosapentaenoyl-CoA + malonyl-CoA + H(+) = 3-oxo-(7Z,10Z,13Z,16Z,19Z)-docosapentaenoyl-CoA + CO2 + CoA. Its pathway is lipid metabolism; polyunsaturated fatty acid biosynthesis. Functionally, catalyzes the first and rate-limiting reaction of the four reactions that constitute the long-chain fatty acids elongation cycle. This endoplasmic reticulum-bound enzymatic process allows the addition of 2 carbons to the chain of long- and very long-chain fatty acids (VLCFAs) per cycle. Condensing enzyme that acts specifically toward polyunsaturated acyl-CoA with the higher activity toward C18:3(n-6) acyl-CoA. May participate in the production of monounsaturated and of polyunsaturated VLCFAs of different chain lengths that are involved in multiple biological processes as precursors of membrane lipids and lipid mediators. In conditions where the essential linoleic and alpha linoleic fatty acids are lacking it is also involved in the synthesis of Mead acid from oleic acid. The protein is Very long chain fatty acid elongase 5 of Pongo abelii (Sumatran orangutan).